A 636-amino-acid polypeptide reads, in one-letter code: LDL receptor repeat-containing protein egg-1 (636 aa).

Over 1–130 (MSSIAQKNRN…NHSNLFQCPS (130 aa)) the chain is Cytoplasmic. Residues 131–151 (VAIVLVLALVILGVLAAIPLT) traverse the membrane as a helical; Signal-anchor for type II membrane protein segment. Residues 152–636 (LMLTSSAQKM…VLKNSGRFPY (485 aa)) lie on the Extracellular side of the membrane. Residue asparagine 202 is glycosylated (N-linked (GlcNAc...) asparagine). LDL-receptor class A domains lie at 205–243 (TCSG…ENCK), 244–296 (ECQS…AMCK), 298–335 (TCSK…NNCN), 336–375 (KCQK…QQCD), 378–415 (TCSG…ENCP), 457–499 (KCHP…KNCT), 503–541 (ECGI…QNCS), and 542–579 (QCAS…LKCS). Disulfide bonds link cysteine 213-cysteine 233, cysteine 227-cysteine 242, cysteine 245-cysteine 273, cysteine 251-cysteine 286, cysteine 280-cysteine 295, cysteine 299-cysteine 312, cysteine 306-cysteine 325, cysteine 319-cysteine 334, cysteine 337-cysteine 365, cysteine 359-cysteine 374, cysteine 379-cysteine 392, cysteine 387-cysteine 405, cysteine 399-cysteine 414, cysteine 458-cysteine 476, cysteine 466-cysteine 489, cysteine 483-cysteine 498, cysteine 504-cysteine 518, cysteine 514-cysteine 531, cysteine 525-cysteine 540, cysteine 543-cysteine 556, cysteine 550-cysteine 569, and cysteine 563-cysteine 578. Asparagine 508 carries an N-linked (GlcNAc...) asparagine glycan. Asparagine 614 carries an N-linked (GlcNAc...) asparagine glycan.

The protein resides in the cell membrane. In terms of biological role, probable receptor which is required for the oocyte-to-zygote transition although its exact function is controversial. Seems to be required for fertilization probably by promoting the interaction or fusion between sperm and oocyte. Conversely, shown to be dispensable for fertilization but required for the formation of a continuous and cohesive eggshell chitin layer by maintaining a homogenous distribution of chitin synthase chs-1 at the unfertilized oocyte cell membrane. Appears to recruit or maintain together to the unfertilized oocyte cortex several proteins including chs-1, kinase mbk-2 and pseudophosphatases egg-3, and possibly egg-4 and egg-5. The protein is LDL receptor repeat-containing protein egg-1 of Caenorhabditis briggsae.